Reading from the N-terminus, the 136-residue chain is Histone H3.2 (136 aa).

The interval 1–45 (MARTKQTARKSTGGKAPRKQLATKAARKSAPATGGVKKPHRYRPG) is disordered. Arginine 3 is modified (asymmetric dimethylarginine; by PRMT6; alternate). Arginine 3 carries the citrulline; alternate modification. Residue threonine 4 is modified to Phosphothreonine; by HASPIN and VRK1. The residue at position 5 (lysine 5) is an Allysine; alternate. At lysine 5 the chain carries N6,N6,N6-trimethyllysine; alternate. N6,N6-dimethyllysine; alternate is present on lysine 5. Residue lysine 5 is modified to N6-(2-hydroxyisobutyryl)lysine; alternate. N6-(beta-hydroxybutyryl)lysine; alternate is present on lysine 5. Position 5 is an N6-acetyllysine; alternate (lysine 5). N6-crotonyllysine; alternate is present on lysine 5. The residue at position 5 (lysine 5) is an N6-methyllysine; alternate. Glutamine 6 bears the 5-glutamyl dopamine; alternate mark. Glutamine 6 carries the 5-glutamyl serotonin; alternate modification. Threonine 7 is subject to Phosphothreonine; by PKC. Citrulline; alternate is present on arginine 9. Arginine 9 is modified (symmetric dimethylarginine; by PRMT5; alternate). N6,N6,N6-trimethyllysine; alternate is present on lysine 10. Lysine 10 carries the N6,N6-dimethyllysine; alternate modification. At lysine 10 the chain carries N6-(2-hydroxyisobutyryl)lysine; alternate. The residue at position 10 (lysine 10) is an N6-(beta-hydroxybutyryl)lysine; alternate. Lysine 10 carries the N6-acetyllysine; alternate modification. The residue at position 10 (lysine 10) is an N6-crotonyllysine; alternate. At lysine 10 the chain carries N6-methyllysine; alternate. Position 10 is an N6-lactoyllysine; alternate (lysine 10). Position 11 is an ADP-ribosylserine; alternate (serine 11). Serine 11 is subject to Phosphoserine; alternate; by AURKB, AURKC, RPS6KA3, RPS6KA4 and RPS6KA5. Threonine 12 is modified (phosphothreonine; by PKC). An N6-(2-hydroxyisobutyryl)lysine; alternate modification is found at lysine 15. Lysine 15 is subject to N6-(beta-hydroxybutyryl)lysine; alternate. An N6-acetyllysine; alternate modification is found at lysine 15. Lysine 15 carries the N6-lactoyllysine; alternate modification. Position 15 is an N6-glutaryllysine; alternate (lysine 15). Residue lysine 15 is modified to N6-succinyllysine; alternate. Arginine 18 is subject to Citrulline; alternate. An Asymmetric dimethylarginine; by CARM1; alternate modification is found at arginine 18. Residues lysine 19 and lysine 24 each carry the N6-(2-hydroxyisobutyryl)lysine; alternate modification. Lysine 19 and lysine 24 each carry N6-(beta-hydroxybutyryl)lysine; alternate. Residues lysine 19 and lysine 24 each carry the N6-acetyllysine; alternate modification. Residues lysine 19 and lysine 24 each carry the N6-crotonyllysine; alternate modification. 2 positions are modified to N6-methyllysine; alternate: lysine 19 and lysine 24. N6-lactoyllysine; alternate occurs at positions 19 and 24. N6-glutaryllysine; alternate occurs at positions 19 and 24. 2 positions are modified to N6-butyryllysine; alternate: lysine 19 and lysine 24. Lysine 19 is lipidated: N6-decanoyllysine. Position 27 is a citrulline (arginine 27). N6,N6,N6-trimethyllysine; alternate is present on lysine 28. N6,N6-dimethyllysine; alternate is present on lysine 28. Residue lysine 28 is modified to N6-(2-hydroxyisobutyryl)lysine; alternate. Lysine 28 is modified (N6-acetyllysine; alternate). Lysine 28 bears the N6-crotonyllysine; alternate mark. Residue lysine 28 is modified to N6-methyllysine; alternate. Residue lysine 28 is modified to N6-lactoyllysine; alternate. Position 28 is an N6-glutaryllysine; alternate (lysine 28). Serine 29 is subject to ADP-ribosylserine; alternate. The residue at position 29 (serine 29) is a Phosphoserine; alternate; by AURKB, AURKC and RPS6KA5. The residue at position 37 (lysine 37) is an N6,N6,N6-trimethyllysine; alternate. Residue lysine 37 is modified to N6,N6-dimethyllysine; alternate. Lysine 37 carries the post-translational modification N6-(2-hydroxyisobutyryl)lysine; alternate. At lysine 37 the chain carries N6-acetyllysine; alternate. The residue at position 37 (lysine 37) is an N6-methyllysine; alternate. Lysine 38 carries the post-translational modification N6-methyllysine. Tyrosine 42 bears the Phosphotyrosine mark. Residue lysine 57 is modified to N6,N6,N6-trimethyllysine; alternate. Residue lysine 57 is modified to N6-(2-hydroxyisobutyryl)lysine; alternate. An N6-(beta-hydroxybutyryl)lysine; alternate modification is found at lysine 57. Lysine 57 carries the N6-acetyllysine; alternate modification. The residue at position 57 (lysine 57) is an N6-crotonyllysine; alternate. Lysine 57 is subject to N6-lactoyllysine; alternate. An N6-glutaryllysine; alternate modification is found at lysine 57. Position 57 is an N6-succinyllysine; alternate (lysine 57). N6-methyllysine; by EHMT2; alternate is present on lysine 57. Serine 58 is subject to Phosphoserine. An N6-(2-hydroxyisobutyryl)lysine; alternate mark is found at lysine 65 and lysine 80. Lysine 65 and lysine 80 each carry N6-methyllysine; alternate. Residue lysine 80 is modified to N6,N6,N6-trimethyllysine; alternate. N6,N6-dimethyllysine; alternate is present on lysine 80. Residue lysine 80 is modified to N6-acetyllysine; alternate. An N6-lactoyllysine; alternate modification is found at lysine 80. An N6-glutaryllysine; alternate modification is found at lysine 80. Residue lysine 80 is modified to N6-succinyllysine; alternate. A Phosphothreonine modification is found at threonine 81. The residue at position 87 (serine 87) is a Phosphoserine. Threonine 108 carries the post-translational modification Phosphothreonine. A lipid anchor (S-palmitoyl cysteine) is attached at cysteine 111. An N6-acetyllysine; alternate mark is found at lysine 116 and lysine 123. N6-glutaryllysine; alternate occurs at positions 116 and 123. Lysine 123 carries the N6-(2-hydroxyisobutyryl)lysine; alternate modification. The residue at position 123 (lysine 123) is an N6-methyllysine; alternate. Lysine 123 carries the post-translational modification N6-succinyllysine; alternate.

Belongs to the histone H3 family. As to quaternary structure, the nucleosome is a histone octamer containing two molecules each of H2A, H2B, H3 and H4 assembled in one H3-H4 heterotetramer and two H2A-H2B heterodimers. The octamer wraps approximately 147 bp of DNA. During nucleosome assembly the chaperone ASF1A interacts with the histone H3-H4 heterodimer (via C-terminus of H3); this interaction is direct. Interacts with DNAJC9, CHAF1A and CHAF1B. Interacts with NASP; NASP is a histone chaperone that stabilizes and maintains a soluble pool of Histone H3-H4 dimers. Post-translationally, acetylation is generally linked to gene activation. Acetylation on Lys-10 (H3K9ac) impairs methylation at Arg-9 (H3R8me2s). Acetylation on Lys-19 (H3K18ac) and Lys-24 (H3K24ac) favors methylation at Arg-18 (H3R17me). Acetylation at Lys-123 (H3K122ac) by EP300/p300 plays a central role in chromatin structure: localizes at the surface of the histone octamer and stimulates transcription, possibly by promoting nucleosome instability. In terms of processing, citrullination at Arg-9 (H3R8ci) and/or Arg-18 (H3R17ci) by PADI4 impairs methylation and represses transcription. Asymmetric dimethylation at Arg-18 (H3R17me2a) by CARM1 is linked to gene activation. Symmetric dimethylation at Arg-9 (H3R8me2s) by PRMT5 is linked to gene repression. Asymmetric dimethylation at Arg-3 (H3R2me2a) by PRMT6 is linked to gene repression and is mutually exclusive with H3 Lys-5 methylation (H3K4me2 and H3K4me3). H3R2me2a is present at the 3' of genes regardless of their transcription state and is enriched on inactive promoters, while it is absent on active promoters. Post-translationally, methylation at Lys-5 (H3K4me), Lys-37 (H3K36me) and Lys-80 (H3K79me) are linked to gene activation. Methylation at Lys-5 (H3K4me) facilitates subsequent acetylation of H3 and H4. Methylation at Lys-80 (H3K79me) is associated with DNA double-strand break (DSB) responses and is a specific target for TP53BP1. Methylation at Lys-10 (H3K9me) and Lys-28 (H3K27me) are linked to gene repression. Methylation at Lys-10 (H3K9me) is a specific target for HP1 proteins (CBX1, CBX3 and CBX5) and prevents subsequent phosphorylation at Ser-11 (H3S10ph) and acetylation of H3 and H4. Methylation at Lys-5 (H3K4me) and Lys-80 (H3K79me) require preliminary monoubiquitination of H2B at 'Lys-120'. Methylation at Lys-10 (H3K9me) and Lys-28 (H3K27me) are enriched in inactive X chromosome chromatin. Monomethylation at Lys-57 (H3K56me1) by EHMT2/G9A in G1 phase promotes interaction with PCNA and is required for DNA replication. In terms of processing, phosphorylated at Thr-4 (H3T3ph) by VRK1. Phosphorylated at Thr-4 (H3T3ph) by HASPIN during prophase and dephosphorylated during anaphase. Phosphorylation at Ser-11 (H3S10ph) by AURKB is crucial for chromosome condensation and cell-cycle progression during mitosis and meiosis. In addition phosphorylation at Ser-11 (H3S10ph) by RPS6KA4 and RPS6KA5 is important during interphase because it enables the transcription of genes following external stimulation, like mitogens, stress, growth factors or UV irradiation and result in the activation of genes, such as c-fos and c-jun. Phosphorylation at Ser-11 (H3S10ph), which is linked to gene activation, prevents methylation at Lys-10 (H3K9me) but facilitates acetylation of H3 and H4. Phosphorylation at Ser-11 (H3S10ph) by AURKB mediates the dissociation of HP1 proteins (CBX1, CBX3 and CBX5) from heterochromatin. Phosphorylation at Ser-11 (H3S10ph) is also an essential regulatory mechanism for neoplastic cell transformation. Phosphorylated at Ser-29 (H3S28ph) by MAP3K20 isoform 1, RPS6KA5 or AURKB during mitosis or upon ultraviolet B irradiation. Phosphorylation at Thr-7 (H3T6ph) by PRKCB is a specific tag for epigenetic transcriptional activation that prevents demethylation of Lys-5 (H3K4me) by LSD1/KDM1A. At centromeres, specifically phosphorylated at Thr-12 (H3T11ph) from prophase to early anaphase, by DAPK3 and PKN1. Phosphorylation at Thr-12 (H3T11ph) by PKN1 or isoform M2 of PKM (PKM2) is a specific tag for epigenetic transcriptional activation that promotes demethylation of Lys-10 (H3K9me) by KDM4C/JMJD2C. Phosphorylation at Tyr-42 (H3Y41ph) by JAK2 promotes exclusion of CBX5 (HP1 alpha) from chromatin. Monoubiquitinated by RAG1 in lymphoid cells, monoubiquitination is required for V(D)J recombination. Ubiquitinated by the CUL4-DDB-RBX1 complex in response to ultraviolet irradiation. This may weaken the interaction between histones and DNA and facilitate DNA accessibility to repair proteins. Post-translationally, lysine deamination at Lys-5 (H3K4all) to form allysine is mediated by LOXL2. Allysine formation by LOXL2 only takes place on H3K4me3 and results in gene repression. In terms of processing, crotonylation (Kcr) is specifically present in male germ cells and marks testis-specific genes in post-meiotic cells, including X-linked genes that escape sex chromosome inactivation in haploid cells. Crotonylation marks active promoters and enhancers and confers resistance to transcriptional repressors. It is also associated with post-meiotically activated genes on autosomes. Butyrylation of histones marks active promoters and competes with histone acetylation. It is present during late spermatogenesis. Post-translationally, succinylation at Lys-80 (H3K79succ) by KAT2A takes place with a maximum frequency around the transcription start sites of genes. It gives a specific tag for epigenetic transcription activation. Desuccinylation at Lys-123 (H3K122succ) by SIRT7 in response to DNA damage promotes chromatin condensation and double-strand breaks (DSBs) repair. In terms of processing, serine ADP-ribosylation by PARP1 or PARP2 constitutes the primary form of ADP-ribosylation of proteins in response to DNA damage. Serine ADP-ribosylation at Ser-11 (H3S10ADPr) promotes recruitment of CHD1L. H3S10ADPr is mutually exclusive with phosphorylation at Ser-11 (H3S10ph) and impairs acetylation at Lys-10 (H3K9ac). Serotonylated by TGM2 at Gln-6 (H3Q5ser) during serotonergic neuron differentiation. H3Q5ser is associated with trimethylation of Lys-5 (H3K4me3) and enhances general transcription factor IID (TFIID) complex-binding to H3K4me3, thereby facilitating transcription. Post-translationally, dopaminylated by TGM2 at Gln-6 (H3Q5dop) in ventral tegmental area (VTA) neurons. H3Q5dop mediates neurotransmission-independent role of nuclear dopamine by regulating relapse-related transcriptional plasticity in the reward system. In terms of processing, lactylated in macrophages by EP300/P300 by using lactoyl-CoA directly derived from endogenous or exogenous lactate, leading to stimulates gene transcription.

The protein localises to the nucleus. It localises to the chromosome. Core component of nucleosome. Nucleosomes wrap and compact DNA into chromatin, limiting DNA accessibility to the cellular machineries which require DNA as a template. Histones thereby play a central role in transcription regulation, DNA repair, DNA replication and chromosomal stability. DNA accessibility is regulated via a complex set of post-translational modifications of histones, also called histone code, and nucleosome remodeling. This Cricetulus longicaudatus (Long-tailed dwarf hamster) protein is Histone H3.2.